A 353-amino-acid polypeptide reads, in one-letter code: Photosystem II D2 protein (353 aa).

Residue Thr2 is modified to N-acetylthreonine. Thr2 carries the phosphothreonine modification. The chain crosses the membrane as a helical span at residues 41–61 (CAYFALGGWFTGTTFVTSWYT). His118 is a chlorophyll a binding site. The chain crosses the membrane as a helical span at residues 125–141 (GFMLRQFELARSVQLRP). 2 residues coordinate pheophytin a: Gln130 and Asn143. A helical membrane pass occupies residues 153-166 (VFVSVFLIYPLGQS). His198 is a binding site for chlorophyll a. A helical transmembrane segment spans residues 208–228 (AALLCAIHGATVENTLFEDGD). A plastoquinone is bound by residues His215 and Phe262. Fe cation is bound at residue His215. Position 269 (His269) interacts with Fe cation. Residues 279 to 295 (GLWMSALGVVGLALNLR) traverse the membrane as a helical segment.

It belongs to the reaction center PufL/M/PsbA/D family. In terms of assembly, PSII is composed of 1 copy each of membrane proteins PsbA, PsbB, PsbC, PsbD, PsbE, PsbF, PsbH, PsbI, PsbJ, PsbK, PsbL, PsbM, PsbT, PsbX, PsbY, PsbZ, Psb30/Ycf12, at least 3 peripheral proteins of the oxygen-evolving complex and a large number of cofactors. It forms dimeric complexes. It depends on The D1/D2 heterodimer binds P680, chlorophylls that are the primary electron donor of PSII, and subsequent electron acceptors. It shares a non-heme iron and each subunit binds pheophytin, quinone, additional chlorophylls, carotenoids and lipids. There is also a Cl(-1) ion associated with D1 and D2, which is required for oxygen evolution. The PSII complex binds additional chlorophylls, carotenoids and specific lipids. as a cofactor.

It localises to the plastid. It is found in the chloroplast thylakoid membrane. It carries out the reaction 2 a plastoquinone + 4 hnu + 2 H2O = 2 a plastoquinol + O2. Photosystem II (PSII) is a light-driven water:plastoquinone oxidoreductase that uses light energy to abstract electrons from H(2)O, generating O(2) and a proton gradient subsequently used for ATP formation. It consists of a core antenna complex that captures photons, and an electron transfer chain that converts photonic excitation into a charge separation. The D1/D2 (PsbA/PsbD) reaction center heterodimer binds P680, the primary electron donor of PSII as well as several subsequent electron acceptors. D2 is needed for assembly of a stable PSII complex. The polypeptide is Photosystem II D2 protein (Ranunculus macranthus (Large buttercup)).